We begin with the raw amino-acid sequence, 368 residues long: Zinc finger protein 24 (368 aa).

A Glycyl lysine isopeptide (Lys-Gly) (interchain with G-Cter in SUMO2) cross-link involves residue Lys22. Lys27 is covalently cross-linked (Glycyl lysine isopeptide (Lys-Gly) (interchain with G-Cter in SUMO1); alternate). Lys27 is covalently cross-linked (Glycyl lysine isopeptide (Lys-Gly) (interchain with G-Cter in SUMO2); alternate). Residues 52–134 enclose the SCAN box domain; it reads RQRFRQFGYQ…TVLEDLESEL (83 aa). Residues Ser132 and Ser142 each carry the phosphoserine modification. Residues Lys147, Lys177, and Lys236 each participate in a glycyl lysine isopeptide (Lys-Gly) (interchain with G-Cter in SUMO2) cross-link. The C2H2-type 1 zinc finger occupies 251 to 273; sequence HICDECGKHFSQGSALILHQRIH. Residues 251–301 form a necessary and sufficient for nuclear localization region; that stretch reads HICDECGKHFSQGSALILHQRIHSGEKPYGCVECGKAFSRSSILVQHQRVH. At Ser274 the chain carries Phosphoserine. Residues Lys277 and Lys286 each participate in a glycyl lysine isopeptide (Lys-Gly) (interchain with G-Cter in SUMO2) cross-link. 3 C2H2-type zinc fingers span residues 279-301, 307-329, and 335-357; these read YGCV…QRVH, YKCL…QRIH, and YECV…XXRH. The residue at position 292 (Ser292) is a Phosphoserine. Tyr335 carries the phosphotyrosine modification. Residues Lys361 and Lys367 each participate in a glycyl lysine isopeptide (Lys-Gly) (interchain with G-Cter in SUMO2) cross-link.

Belongs to the krueppel C2H2-type zinc-finger protein family. Sumoylated.

It is found in the nucleus. Transcription factor required for myelination of differentiated oligodendrocytes. Required for the conversion of oligodendrocytes from the premyelinating to the myelinating state. In the developing central nervous system (CNS), involved in the maintenance in the progenitor stage by promoting the cell cycle. Specifically binds to the 5'-TCAT-3' DNA sequence. Has transcription repressor activity in vitro. This Pan troglodytes (Chimpanzee) protein is Zinc finger protein 24 (ZNF24).